We begin with the raw amino-acid sequence, 73 residues long: Protein SlyX homolog (73 aa).

The protein belongs to the SlyX family.

This Histophilus somni (strain 2336) (Haemophilus somnus) protein is Protein SlyX homolog.